The following is a 432-amino-acid chain: Eukaryotic translation initiation factor 3 subunit E (432 aa).

One can recognise a PCI domain in the interval V221 to E401.

This sequence belongs to the eIF-3 subunit E family. Component of the eukaryotic translation initiation factor 3 (eIF-3) complex.

Its subcellular location is the cytoplasm. Its function is as follows. Component of the eukaryotic translation initiation factor 3 (eIF-3) complex, which is involved in protein synthesis of a specialized repertoire of mRNAs and, together with other initiation factors, stimulates binding of mRNA and methionyl-tRNAi to the 40S ribosome. The eIF-3 complex specifically targets and initiates translation of a subset of mRNAs involved in cell proliferation. This chain is Eukaryotic translation initiation factor 3 subunit E, found in Caenorhabditis elegans.